Here is a 92-residue protein sequence, read N- to C-terminus: MARSLKKGPFIAHHLLKKVELLNTSGKTEVIKTWSRASTILPMMVGHTIAVHNGRQHLPVFITDQMVGHKLGEFAPTRTFKGHTKSDKKARR.

Belongs to the universal ribosomal protein uS19 family.

It is found in the plastid. Its subcellular location is the cyanelle. In terms of biological role, protein S19 forms a complex with S13 that binds strongly to the 16S ribosomal RNA. This Cyanophora paradoxa protein is Small ribosomal subunit protein uS19c (rps19).